The sequence spans 321 residues: Putative membrane-bound redox modulator Alx (321 aa).

The Periplasmic segment spans residues Met1–Thr6. The helical transmembrane segment at Pro7–Leu27 threads the bilayer. At Gln28–Ala43 the chain is on the cytoplasmic side. The helical transmembrane segment at Trp44–Val64 threads the bilayer. Over Gln65 to Leu89 the chain is Periplasmic. The helical transmembrane segment at Ala90–Leu110 threads the bilayer. Residues Gln111–Arg113 lie on the Cytoplasmic side of the membrane. A helical transmembrane segment spans residues Val114 to Ser134. Trp135 is a topological domain (periplasmic). Residues Leu136–Val156 form a helical membrane-spanning segment. Residues Lys157–Gly198 lie on the Cytoplasmic side of the membrane. Residues Leu199–Phe219 form a helical membrane-spanning segment. Topologically, residues Ala220–Pro225 are periplasmic. The chain crosses the membrane as a helical span at residues Ala226–Leu246. At Gly247–Arg261 the chain is on the cytoplasmic side. The chain crosses the membrane as a helical span at residues Phe262 to Ile282. Residues Val283–Tyr286 lie on the Periplasmic side of the membrane. The helical transmembrane segment at His287–Ile307 threads the bilayer. Residues Asn308–Gly321 lie on the Cytoplasmic side of the membrane.

The protein belongs to the TerC family.

The protein localises to the cell inner membrane. Its function is as follows. Has been proposed to be a redox modulator. This Escherichia coli (strain K12) protein is Putative membrane-bound redox modulator Alx.